The primary structure comprises 131 residues: Ribonuclease VapC13 (131 aa).

The PINc domain maps to 2 to 128; it reads ILVDSNIPMY…RGFDSYPGIK (127 aa). Mg(2+) contacts are provided by Asp-5 and Asp-99.

This sequence belongs to the PINc/VapC protein family. Requires Mg(2+) as cofactor.

Its subcellular location is the secreted. Functionally, toxic component of a type II toxin-antitoxin (TA) system. An RNase. The cognate antitoxin is VapB13. This chain is Ribonuclease VapC13, found in Mycobacterium tuberculosis (strain ATCC 25618 / H37Rv).